The primary structure comprises 514 residues: Probable WRKY transcription factor 4 (514 aa).

3 disordered regions span residues 1 to 28 (MSEK…PPRP), 175 to 204 (QPQT…PLPA), and 278 to 394 (YKGQ…TVTE). Composition is skewed to polar residues over residues 185–198 (QVQS…QIPT) and 286–299 (PPQN…DNTA). Residues 223-287 (NVDKPADDGY…YKGQHNHEPP (65 aa)) constitute a DNA-binding region (WRKY 1). Low complexity predominate over residues 300–313 (NINGSSINNNRGSS). Polar residues predominate over residues 315–326 (LGASQFQTNSSN). A compositionally biased stretch (basic and acidic residues) spans 359–380 (TDVREKDENEPDPKRRSTEVRI). Residues 403–468 (SEVDLLDDGY…YEGKHNHDLP (66 aa)) constitute a DNA-binding region (WRKY 2). Residues Cys-434, Thr-436, Cys-439, His-463, and His-465 each coordinate Zn(2+). Positions 464–514 (NHDLPAAKSSSHAAAAAQLRPDNRPGGLANLNQQQQQQPVARLRLKEEQTT) are disordered. A compositionally biased stretch (low complexity) spans 469-480 (AAKSSSHAAAAA).

In young, mature and senescent leaves.

Its subcellular location is the nucleus. Its function is as follows. Transcription factor that binds specifically to the W box (5'-(T)TGAC[CT]-3'), a frequently occurring elicitor-responsive cis-acting element. Has a positive role in resistance to necrotrophic pathogens (e.g. Botrytis cinerea), but a negative effect on plant resistance to biotrophic pathogens (e.g. Pseudomonas syringae). The polypeptide is Probable WRKY transcription factor 4 (WRKY4) (Arabidopsis thaliana (Mouse-ear cress)).